A 131-amino-acid chain; its full sequence is MTTKRKPYVRPMTSTWWKKLPFYRFYMLREGTAVPAVWFSIELIFGLFALKNGPEAWAGFVDFLQNPVIVIINLITLAAALLHTKTWFELAPKAANIIVKDEKIGPEPIIKSLWAVTVVATIVILFVALYW.

The next 3 helical transmembrane spans lie at 30–50 (EGTAVPAVWFSIELIFGLFAL), 63–83 (FLQNPVIVIINLITLAAALLH), and 109–129 (IIKSLWAVTVVATIVILFVAL).

Belongs to the FrdC family. As to quaternary structure, part of an enzyme complex containing four subunits: a flavoprotein (FrdA), an iron-sulfur protein (FrdB), and two hydrophobic anchor proteins (FrdC and FrdD).

Its subcellular location is the cell inner membrane. Two distinct, membrane-bound, FAD-containing enzymes are responsible for the catalysis of fumarate and succinate interconversion; fumarate reductase is used in anaerobic growth, and succinate dehydrogenase is used in aerobic growth. Anchors the catalytic components of the fumarate reductase complex to the cell inner membrane, binds quinones. This Shigella dysenteriae serotype 1 (strain Sd197) protein is Fumarate reductase subunit C.